The primary structure comprises 314 residues: MNDLTVVFAGTPEFGLPCLDALIQSRHHLKAVYTQPDRPAGRGRKLQESPVKEWAINHQIPVYQPLNFKNQEAVDELSALKPDVMVVIAYGLILPKAVLEIPRLGCINVHASLLPRWRGASPIQHAILHGDAESGVTIMQMDVGLDTGPMLCKATCPVTSSDTAGSLHDKLAKMSVKPLLDVLEALASNSAQFELQNNELATYAGKINKEEARINWHQSAVEIDRKIRAFNPWPVAYTLAGELMLRIHQAKATDIMSTEMPGMVLNVDKNGMLVATNDNALLVEKIQFPGAKVISVRDWLNSGKTQLHTGLMLQ.

Residue 112–115 (SLLP) participates in (6S)-5,6,7,8-tetrahydrofolate binding.

It belongs to the Fmt family.

It catalyses the reaction L-methionyl-tRNA(fMet) + (6R)-10-formyltetrahydrofolate = N-formyl-L-methionyl-tRNA(fMet) + (6S)-5,6,7,8-tetrahydrofolate + H(+). Attaches a formyl group to the free amino group of methionyl-tRNA(fMet). The formyl group appears to play a dual role in the initiator identity of N-formylmethionyl-tRNA by promoting its recognition by IF2 and preventing the misappropriation of this tRNA by the elongation apparatus. The polypeptide is Methionyl-tRNA formyltransferase (Legionella pneumophila (strain Paris)).